The sequence spans 455 residues: Probable circularly permuted 1,3-beta-glucanase TOS1 (455 aa).

The signal sequence occupies residues 1 to 23 (MLQKLSMTALVGLFSSVVSLVNA). The segment at 158-221 (TADSTNTVVG…SSSSSSNTNG (64 aa)) is disordered. Polar residues predominate over residues 172 to 189 (SSYTKDSTVLSSSAQAVE). Residues 190–219 (TSESQSSISSSKTTSSAAAASSSSSSSSNT) show a composition bias toward low complexity. A glycan (N-linked (GlcNAc...) asparagine) is linked at N236. The short motif at 372 to 377 (EMDLFE) is the ExDxxE motif element. A glycan (N-linked (GlcNAc...) asparagine) is linked at N417.

It belongs to the PGA52 family.

The protein localises to the secreted. The protein resides in the cell wall. The enzyme catalyses Hydrolysis of (1-&gt;3)-beta-D-glucosidic linkages in (1-&gt;3)-beta-D-glucans.. In terms of biological role, probable circularly permuted 1,3-beta-glucanase involved in cell wall modification through beta-1,3-glucan network alterations such as increased branching or remodeling. In Saccharomyces cerevisiae (strain ATCC 204508 / S288c) (Baker's yeast), this protein is Probable circularly permuted 1,3-beta-glucanase TOS1.